The primary structure comprises 502 residues: Probable mRNA-splicing protein ubp10 (502 aa).

The segment at 56-153 (SQNLYLDTIN…YVMRPTFTKL (98 aa)) adopts a UBP-type; degenerate zinc-finger fold. 4 residues coordinate Zn(2+): C89, C92, H108, and H114. Positions 178–501 (VGMNNIKNND…ESFIQLWERS (324 aa)) constitute a USP domain.

It belongs to the peptidase C19 family.

The protein localises to the nucleus. In terms of biological role, may play a role in mRNA splicing. It is unsure if the protein really exhibits hydrolase activity. Could be a competitor of ubiquitin C-terminal hydrolases (UCHs). The sequence is that of Probable mRNA-splicing protein ubp10 (ubp10) from Schizosaccharomyces pombe (strain 972 / ATCC 24843) (Fission yeast).